Consider the following 380-residue polypeptide: MTDSLHNAPIVLDNGSGTIRAGFAGDDVPKCHFPSFVGRPKHLRVLAGALEGEVFIGQKAASELRGLLKIRYPLEHGIVTDWDDMEKIWAYVYDEGLKTLSEEHPVLLTEPPLNPRANRDTAAQILFETFNVPALYTSIQAVLSLYASGRTTGVVLDSGDGVSHAVPVYQGFTVPNSIRRIDVAGRDVTEYLQTLLRKSGYVFHTSAEKEVVRLIKESVTYVAHDPRKEEKEWAAAKMDPAKIAEYVLPDGNKLKIGAERFRAPEILFDPEIIGLEYPGVHQIVVDSINRTDLDLRRDLYSNIVLSGGSTLTKGFGDRLLTEVQKLAVKDMRIKIFAPPERKYSTWIGGSILAGLSTFRKMWVSIDDWHENPDIIHTKFT.

This sequence belongs to the actin family. ARP1 subfamily.

The protein localises to the cytoplasm. The protein resides in the cytoskeleton. Functionally, involved in nuclear migration. May function as a component of the dynactin complex which activates force generation by cytoplasmic dynein. In Neurospora crassa (strain ATCC 24698 / 74-OR23-1A / CBS 708.71 / DSM 1257 / FGSC 987), this protein is Actin-like protein (ro-4).